A 291-amino-acid chain; its full sequence is Taste receptor type 2 member 16 (291 aa).

A topological domain (extracellular) is located at residue Met1. A helical transmembrane segment spans residues 2–22; sequence IPIQLTVFFMIIYVLESLTII. At 23 to 41 the chain is on the cytoplasmic side; it reads VQSSLIVAVLGREWLQVRR. Residues 42-62 form a helical membrane-spanning segment; it reads LMPVDMILISLGISRFCLQWA. Over 63-84 the chain is Extracellular; that stretch reads SMLNNFCSYLNLNYVLCNLTIT. Asn80 carries N-linked (GlcNAc...) asparagine glycosylation. The helical transmembrane segment at 85–105 threads the bilayer; that stretch reads WEFFNILTFWLNSLLTVFYCI. The Cytoplasmic portion of the chain corresponds to 106–125; sequence KVSSFTHHIFLWVRWRILRW. The chain crosses the membrane as a helical span at residues 126–146; that stretch reads FPWILLGSLTIACVTIIPSAI. Topologically, residues 147–182 are extracellular; the sequence is GNYIQIQLLTMEHLPRNSTVTDRLEKFHQYQFQSHT. N-linked (GlcNAc...) asparagine glycosylation occurs at Asn163. The chain crosses the membrane as a helical span at residues 183 to 203; sequence VALVIPFILFLASTILLMASL. At 204 to 228 the chain is on the cytoplasmic side; the sequence is TKQIQHHSTGHCNPSMKAHFTALRS. Residues 229–249 traverse the membrane as a helical segment; it reads LAILFIVFTSYFLIILITIIG. Residues 250 to 257 lie on the Extracellular side of the membrane; the sequence is TLFDKRCW. The helical transmembrane segment at 258 to 278 threads the bilayer; that stretch reads LWVWEAFVYAFILMHSTSLML. At 279-291 the chain is on the cytoplasmic side; that stretch reads SSPTLKRILKGKC.

It belongs to the G-protein coupled receptor T2R family. In terms of assembly, interacts with RTP3 and RTP4.

The protein localises to the cell membrane. Its function is as follows. Receptor that may play a role in the perception of bitterness and is gustducin-linked. May function as a bitter taste receptor for the phytonutrient beta glucopyranosides, some of which are toxic and some of which lower the risk of cancer and cardiovascular disease. The activity of this receptor may stimulate alpha gustducin, mediate PLC-beta-2 activation and lead to the gating of TRPM5. The polypeptide is Taste receptor type 2 member 16 (TAS2R16) (Pongo pygmaeus (Bornean orangutan)).